The chain runs to 127 residues: Profilin (127 aa).

It belongs to the profilin family. Occurs in many kinds of cells as a complex with monomeric actin in a 1:1 ratio.

Its subcellular location is the cytoplasm. The protein resides in the cytoskeleton. Binds to actin and affects the structure of the cytoskeleton. At high concentrations, profilin prevents the polymerization of actin, whereas it enhances it at low concentrations. By binding to PIP2, it inhibits the formation of IP3 and DG. In S.pombe, it is essential for cytokinesis. This is Profilin (cdc3) from Schizosaccharomyces pombe (strain 972 / ATCC 24843) (Fission yeast).